The primary structure comprises 368 residues: Anhydro-N-acetylmuramic acid kinase (368 aa).

13-20 (GTSLDGVD) contacts ATP.

Belongs to the anhydro-N-acetylmuramic acid kinase family.

The enzyme catalyses 1,6-anhydro-N-acetyl-beta-muramate + ATP + H2O = N-acetyl-D-muramate 6-phosphate + ADP + H(+). Its pathway is amino-sugar metabolism; 1,6-anhydro-N-acetylmuramate degradation. The protein operates within cell wall biogenesis; peptidoglycan recycling. In terms of biological role, catalyzes the specific phosphorylation of 1,6-anhydro-N-acetylmuramic acid (anhMurNAc) with the simultaneous cleavage of the 1,6-anhydro ring, generating MurNAc-6-P. Is required for the utilization of anhMurNAc either imported from the medium or derived from its own cell wall murein, and thus plays a role in cell wall recycling. In Hahella chejuensis (strain KCTC 2396), this protein is Anhydro-N-acetylmuramic acid kinase.